The sequence spans 640 residues: Dextranase (640 aa).

An N-terminal signal peptide occupies residues 1–32 (MPGTGLGRLAKHVTAAAAVFLISTGAVLPAQA).

This sequence belongs to the glycosyl hydrolase 49 family.

It is found in the secreted. The catalysed reaction is Endohydrolysis of (1-&gt;6)-alpha-D-glucosidic linkages in dextran.. The sequence is that of Dextranase from Arthrobacter globiformis.